We begin with the raw amino-acid sequence, 148 residues long: SsrA-binding protein (148 aa).

This sequence belongs to the SmpB family.

The protein resides in the cytoplasm. In terms of biological role, required for rescue of stalled ribosomes mediated by trans-translation. Binds to transfer-messenger RNA (tmRNA), required for stable association of tmRNA with ribosomes. tmRNA and SmpB together mimic tRNA shape, replacing the anticodon stem-loop with SmpB. tmRNA is encoded by the ssrA gene; the 2 termini fold to resemble tRNA(Ala) and it encodes a 'tag peptide', a short internal open reading frame. During trans-translation Ala-aminoacylated tmRNA acts like a tRNA, entering the A-site of stalled ribosomes, displacing the stalled mRNA. The ribosome then switches to translate the ORF on the tmRNA; the nascent peptide is terminated with the 'tag peptide' encoded by the tmRNA and targeted for degradation. The ribosome is freed to recommence translation, which seems to be the essential function of trans-translation. This is SsrA-binding protein from Azoarcus sp. (strain BH72).